The following is a 622-amino-acid chain: Cytochrome c oxidase subunit 1 (622 aa).

The Extracellular portion of the chain corresponds to 1–27; that stretch reads MLNALTEKRTRGSMLWDYLTTVDHKKI. A helical transmembrane segment spans residues 28 to 46; sequence AILYLVAGGFFFLVGGIEA. Topologically, residues 47–68 are cytoplasmic; sequence MFIRIQLAKPENAFLSAQAYNE. A helical transmembrane segment spans residues 69–88; it reads VMTMHGTTMIFLAAMPLLFA. His-73 is a Fe(II)-heme a binding site. Topologically, residues 89–110 are extracellular; that stretch reads LMNAVVPLQIGARDVSFPFLNA. Residues 111–128 form a helical membrane-spanning segment; it reads LGFWLFFFGGIFLNLSWF. Topologically, residues 129–159 are cytoplasmic; the sequence is LGGAPDAGWTSYASLSLHSKGHGIDFFVLGL. Residues 160-178 form a helical membrane-spanning segment; sequence QISGLGTLIAGINFLATII. Topologically, residues 179–196 are extracellular; the sequence is NMRAPGMTYMRLPLFTWT. Residues 197-215 traverse the membrane as a helical segment; it reads TFVASALILFAFPPLTVGL. Topologically, residues 216–241 are cytoplasmic; it reads ALMMLDRLFGTNFFNPELGGNTVIWE. A helical transmembrane segment spans residues 242–261; that stretch reads HLFWIFGHPEVYILILPAFG. His-249 and Tyr-253 together coordinate Cu cation. The segment at residues 249–253 is a cross-link (1'-histidyl-3'-tyrosine (His-Tyr)); sequence HPEVY. Over 262-284 the chain is Extracellular; sequence IFSEVIPVFARKRLFGYSSMVFA. Residues 285-304 traverse the membrane as a helical segment; sequence IVLIGFLGFMVWVHHMFTTG. Residues His-298 and His-299 each contribute to the Cu cation site. At 305 to 312 the chain is on the cytoplasmic side; that stretch reads LGPIANAI. Residues 313 to 331 form a helical membrane-spanning segment; sequence FAVATMAIAIPTGIKIFNW. At 332 to 346 the chain is on the extracellular side; the sequence is LLTIWGGNVKYTTAM. A helical transmembrane segment spans residues 347-366; it reads LYAVSFIPSFVLGGVTGVML. Over 367 to 374 the chain is Cytoplasmic; that stretch reads AAAAADYQ. Residues 375 to 394 form a helical membrane-spanning segment; it reads FHDTYFVVAHFHYVIIGGVV. His-384 provides a ligand contact to heme a3. Residue His-386 coordinates Fe(II)-heme a. The Extracellular portion of the chain corresponds to 395–421; sequence FGLLAGVHFWWPKMFGKILHETMGKIS. Residues 422-441 traverse the membrane as a helical segment; it reads FVLFFIGFHLTFFIQHFVGL. Residues 442 to 459 are Cytoplasmic-facing; that stretch reads MGMPRRVYTFLPGQGLET. Residues 460 to 479 form a helical membrane-spanning segment; that stretch reads GNLISTIGAFFMAAAVILLL. Residues 480 to 552 lie on the Extracellular side of the membrane; sequence VNVIWTSVKG…EPVDDIHMPN (73 aa). A helical membrane pass occupies residues 553–572; the sequence is GSILPLIISFGLFVAAFGLL. Residues 573 to 580 are Cytoplasmic-facing; that stretch reads YRSDYAWG. The helical transmembrane segment at 581 to 604 threads the bilayer; the sequence is LPVIFIGLGITFITMLLRSVIDDH. The Cytoplasmic portion of the chain corresponds to 605 to 622; the sequence is GYHIHKEELPNDDKGVKA.

It belongs to the heme-copper respiratory oxidase family. Cu(2+) serves as cofactor. It depends on heme as a cofactor.

The protein resides in the cell membrane. The catalysed reaction is 4 Fe(II)-[cytochrome c] + O2 + 8 H(+)(in) = 4 Fe(III)-[cytochrome c] + 2 H2O + 4 H(+)(out). The protein operates within energy metabolism; oxidative phosphorylation. In terms of biological role, cytochrome c oxidase is the component of the respiratory chain that catalyzes the reduction of oxygen to water. Subunits 1-3 form the functional core of the enzyme complex. Co I is the catalytic subunit of the enzyme. Electrons originating in cytochrome c are transferred via the copper A center of subunit 2 and heme a of subunit 1 to the bimetallic center formed by heme a3 and copper B. This cytochrome c oxidase shows proton pump activity across the membrane in addition to the electron transfer. The chain is Cytochrome c oxidase subunit 1 (ctaD) from Bacillus subtilis (strain 168).